Consider the following 440-residue polypeptide: Beta-1,3-galactosyl-O-glycosyl-glycoprotein beta-1,6-N-acetylglucosaminyltransferase 3 (440 aa).

At 1–12 (MKMTGWKKKLCR) the chain is on the cytoplasmic side. The helical; Signal-anchor for type II membrane protein transmembrane segment at 13–30 (GHHLWALGCYSLLAVVAL) threads the bilayer. Residues 31 to 440 (RLSLRLKCDV…RHKAIYGTEL (410 aa)) are Lumenal-facing. Intrachain disulfides connect Cys-73–Cys-230, Cys-164–Cys-384, Cys-185–Cys-212, and Cys-393–Cys-425. The N-linked (GlcNAc...) asparagine glycan is linked to Asn-108.

It belongs to the glycosyltransferase 14 family. In terms of processing, N-glycosylated.

The protein resides in the golgi apparatus membrane. It carries out the reaction a 3-O-[beta-D-galactosyl-(1-&gt;3)-N-acetyl-alpha-D-galactosaminyl]-L-seryl-[protein] + UDP-N-acetyl-alpha-D-glucosamine = 3-O-{beta-D-galactosyl-(1-&gt;3)-[N-acetyl-beta-D-glucosaminyl-(1-&gt;6)]-N-acetyl-alpha-D-galactosaminyl}-L-seryl-[protein] + UDP + H(+). It catalyses the reaction a 3-O-[beta-D-galactosyl-(1-&gt;3)-N-acetyl-alpha-D-galactosaminyl]-L-threonyl-[protein] + UDP-N-acetyl-alpha-D-glucosamine = a 3-O-{beta-D-galactosyl-(1-&gt;3)-[N-acetyl-beta-D-glucosaminyl-(1-&gt;6)]-N-acetyl-alpha-D-galactosaminyl}-L-threonyl-[protein] + UDP + H(+). The catalysed reaction is a beta-D-Gal-(1-&gt;4)-beta-D-GlcNAc-(1-&gt;3)-beta-D-Gal-(1-&gt;4)-beta-D-GlcNAc derivative + UDP-N-acetyl-alpha-D-glucosamine = a beta-D-Gal-(1-&gt;4)-beta-D-GlcNAc-(1-&gt;3)-[beta-D-GlcNAc-(1-&gt;6)]-beta-D-Gal-(1-&gt;4)-N-acetyl-beta-D-glucosaminyl derivative + UDP + H(+). The enzyme catalyses 3-O-[N-acetyl-beta-D-glucosaminyl-(1-&gt;3)-N-acetyl-alpha-D-galactosaminyl]-L-seryl-[protein] + UDP-N-acetyl-alpha-D-glucosamine = 3-O-[N-acetyl-beta-D-glucosaminyl-(1-&gt;3)-[N-acetyl-beta-D-glucosaminyl-(1-&gt;6)]-N-acetyl-alpha-D-galactosaminyl]-L-seryl-[protein] + UDP + H(+). It carries out the reaction a 3-O-[N-acetyl-beta-D-glucosaminyl-(1-&gt;3)-N-acetyl-alpha-D-galactosaminyl]-L-threonyl-[protein] + UDP-N-acetyl-alpha-D-glucosamine = 3-O-[N-acetyl-beta-D-glucosaminyl-(1-&gt;3)-[N-acetyl-beta-D-glucosaminyl-(1-&gt;6)]-N-acetyl-alpha-D-galactosaminyl]-L-threonyl-[protein] + UDP + H(+). Its pathway is protein modification; protein glycosylation. Glycosyltransferase that can synthesize all known mucin beta 6 N-acetylglucosaminides. Mediates core 2 and core 4 O-glycan branching, 2 important steps in mucin-type biosynthesis. Also has I-branching enzyme activity by converting linear into branched poly-N-acetyllactosaminoglycans, leading to introduce the blood group I antigen during embryonic development. This Bos mutus grunniens (Wild yak) protein is Beta-1,3-galactosyl-O-glycosyl-glycoprotein beta-1,6-N-acetylglucosaminyltransferase 3 (GCNT3).